Here is a 251-residue protein sequence, read N- to C-terminus: NADPH-dependent oxidoreductase (251 aa).

Belongs to the flavin oxidoreductase frp family. It depends on FMN as a cofactor.

Reduces FMN, organic nitro compounds and disulfide DTNB. Involved in maintenance of the cellular redox state and the disulfide stress response. This is NADPH-dependent oxidoreductase (nfrA) from Staphylococcus epidermidis (strain ATCC 12228 / FDA PCI 1200).